The primary structure comprises 1885 residues: Chitin synthase 5 (1885 aa).

Positions 1-789 (MATRGNVPAH…SIALTGSQAA (789 aa)) constitute a Myosin motor domain. 99 to 106 (GESGSGKT) contacts ATP. Asparagine 219 and asparagine 429 each carry an N-linked (GlcNAc...) asparagine glycan. Positions 601–649 (KPLRMPSVSRKKHDQLRRMASRRADRSPAPQEEEPLPGTEEAKVRRTKP) are disordered. Basic residues predominate over residues 609-621 (SRKKHDQLRRMAS). Positions 666 to 690 (LDNITKSLTAPNVNNYFVFCLKPND) are actin-binding. N-linked (GlcNAc...) asparagine glycosylation is present at asparagine 668. Residues 794-817 (GDIGSPSRPDTPGHNPFSDSKARL) are disordered. 2 helical membrane-spanning segments follow: residues 894-914 (WLAI…KWIG) and 929-949 (FAIN…IIVF). In terms of domain architecture, Cytochrome b5 heme-binding spans 957-1016 (QNVYSAAELSAHDGKGKHSAYVAIRGQVFDLGAFMPNHYPKIIPQSSLKKYAGVDATGLF). 2 N-linked (GlcNAc...) asparagine glycosylation sites follow: asparagine 1043 and asparagine 1068. A helical transmembrane segment spans residues 1205-1225 (ILLAVSILLCSVIGFKFFAAL). Residues asparagine 1462 and asparagine 1568 are each glycosylated (N-linked (GlcNAc...) asparagine). Transmembrane regions (helical) follow at residues 1599–1619 (LLST…IVLL), 1626–1646 (VPLT…IIFI), and 1653–1673 (MIGW…GLPL). Residues asparagine 1759 and asparagine 1790 are each glycosylated (N-linked (GlcNAc...) asparagine). Residues 1827–1882 (LPTDDMLLNEIRDILRTADLMTVTKKGIKQELERRFNVNLDMKRAYIGSATEAILS) enclose the DEK-C domain.

The protein in the N-terminal section; belongs to the TRAFAC class myosin-kinesin ATPase superfamily. Myosin family. In the C-terminal section; belongs to the chitin synthase family. Class V subfamily. In terms of processing, maximal activity requires trypsin activation, suggesting a zymogenic nature.

It is found in the cell membrane. The protein localises to the membrane. The enzyme catalyses [(1-&gt;4)-N-acetyl-beta-D-glucosaminyl](n) + UDP-N-acetyl-alpha-D-glucosamine = [(1-&gt;4)-N-acetyl-beta-D-glucosaminyl](n+1) + UDP + H(+). Polymerizes chitin, a structural polymer of the cell wall and septum, by transferring the sugar moiety of UDP-GlcNAc to the non-reducing end of the growing chitin polymer. CHS5 is required for the sustained growth at 37 degrees Celsius and is of critical importance for virulence. Especially important at infection temperatures for maintaining the cell wall integrity of developing yeast buds, elongating tips of hyphae, and random sites of expansion in sclerotic forms. The protein is Chitin synthase 5 of Exophiala dermatitidis (Black yeast-like fungus).